A 304-amino-acid chain; its full sequence is Non-specific ribonucleoside hydrolase RihC (304 aa).

Histidine 233 is a catalytic residue.

Belongs to the IUNH family. RihC subfamily.

Functionally, hydrolyzes both purine and pyrimidine ribonucleosides with a broad-substrate specificity. The protein is Non-specific ribonucleoside hydrolase RihC of Escherichia coli (strain SMS-3-5 / SECEC).